A 194-amino-acid polypeptide reads, in one-letter code: Potassium-transporting ATPase KdpC subunit (194 aa).

The helical transmembrane segment at 12–34 (LFLLLLTGGVYPLLTTALGQWWF) threads the bilayer.

Belongs to the KdpC family. The system is composed of three essential subunits: KdpA, KdpB and KdpC.

Its subcellular location is the cell inner membrane. Part of the high-affinity ATP-driven potassium transport (or Kdp) system, which catalyzes the hydrolysis of ATP coupled with the electrogenic transport of potassium into the cytoplasm. This subunit acts as a catalytic chaperone that increases the ATP-binding affinity of the ATP-hydrolyzing subunit KdpB by the formation of a transient KdpB/KdpC/ATP ternary complex. The protein is Potassium-transporting ATPase KdpC subunit of Salmonella heidelberg (strain SL476).